Here is a 372-residue protein sequence, read N- to C-terminus: Chloroplast protein FOR GROWTH AND FERTILITY 2 (372 aa).

The disordered stretch occupies residues 1-20 (MDRLLQPPSSHSIAPSKFQS). Residues 1–78 (MDRLLQPPSS…NQSSNFLIAS (78 aa)) constitute a chloroplast transit peptide. A compositionally biased stretch (polar residues) spans 7-20 (PPSSHSIAPSKFQS). A run of 7 helical transmembrane segments spans residues 109 to 129 (VILVSAIAALLLNPILVPPAF), 161 to 181 (FFAGCLHTLSGPDHLAALAPL), 195 to 215 (ALWGCGHDAGQLIFGLLFLLL), 231 to 251 (VVGLTLLVIGAMGIKEASEMP), 281 to 301 (GIVHGLQPDALMMVLPALALP), 309 to 329 (FLIMFLIGTVIAMGSYTVFIG), and 352 to 372 (LVAIGLGLAIIVSQFFGFSLY).

As to expression, mostly expressed in leaves, stems and flowers, to a lower extent, in roots, floral bud, inflorescence and siliques, and, barely, in seedlings.

Its subcellular location is the plastid. It localises to the chloroplast membrane. The protein localises to the plastid membrane. Its function is as follows. Together with CGF1, essential protein which supports female gametogenesis and embryogenesis, probably by securing local energy supply. This Arabidopsis thaliana (Mouse-ear cress) protein is Chloroplast protein FOR GROWTH AND FERTILITY 2.